Reading from the N-terminus, the 127-residue chain is Protein ApaG (127 aa).

Positions 3–127 constitute an ApaG domain; it reads DADVYAISVE…FVLAIPRTLH (125 aa).

This is Protein ApaG from Stenotrophomonas maltophilia (strain K279a).